Reading from the N-terminus, the 95-residue chain is Acylphosphatase (95 aa).

The 89-residue stretch at 7–95 (CTMAWVYGSV…RSWDKFAILY (89 aa)) folds into the Acylphosphatase-like domain. Active-site residues include Arg-22 and Asn-40.

The protein belongs to the acylphosphatase family.

It catalyses the reaction an acyl phosphate + H2O = a carboxylate + phosphate + H(+). The protein is Acylphosphatase (acyP) of Klebsiella pneumoniae subsp. pneumoniae (strain ATCC 700721 / MGH 78578).